The primary structure comprises 110 residues: Phosphoribosyl-ATP pyrophosphatase (110 aa).

It belongs to the PRA-PH family.

Its subcellular location is the cytoplasm. It carries out the reaction 1-(5-phospho-beta-D-ribosyl)-ATP + H2O = 1-(5-phospho-beta-D-ribosyl)-5'-AMP + diphosphate + H(+). Its pathway is amino-acid biosynthesis; L-histidine biosynthesis; L-histidine from 5-phospho-alpha-D-ribose 1-diphosphate: step 2/9. The protein is Phosphoribosyl-ATP pyrophosphatase of Pseudomonas fluorescens (strain SBW25).